Here is a 132-residue protein sequence, read N- to C-terminus: Large ribosomal subunit protein bL17 (132 aa).

It belongs to the bacterial ribosomal protein bL17 family. Part of the 50S ribosomal subunit. Contacts protein L32.

This Anaplasma phagocytophilum (strain HZ) protein is Large ribosomal subunit protein bL17.